The sequence spans 591 residues: F420 non-reducing hydrogenase II large subunit (591 aa).

Glu-42 is a Mg(2+) binding site. 4 residues coordinate Ni(2+): Cys-61, Cys-64, Cys-569, and Cys-572. Fe cation is bound at residue Cys-64. Residue Cys-572 participates in Fe cation binding. Residue His-575 coordinates Mg(2+).

Belongs to the [NiFe]/[NiFeSe] hydrogenase large subunit family. In terms of assembly, composed of a large subunit (VhtA), a small subunit (VhtG) and a cytochrome subunit (VhtC). Ni(2+) serves as cofactor. It depends on Fe cation as a cofactor.

Its subcellular location is the cell membrane. The catalysed reaction is methanophenazine + H2 = dihydromethanophenazine. Part of the F420 non-reducing hydrogenase II complex that catalyzes the reduction of methanophenazine to dihydromethanophenazine. This is F420 non-reducing hydrogenase II large subunit from Methanosarcina mazei (strain ATCC BAA-159 / DSM 3647 / Goe1 / Go1 / JCM 11833 / OCM 88) (Methanosarcina frisia).